A 136-amino-acid chain; its full sequence is UPF0225 protein Mpe_A2093 (136 aa).

Belongs to the UPF0225 family.

In Methylibium petroleiphilum (strain ATCC BAA-1232 / LMG 22953 / PM1), this protein is UPF0225 protein Mpe_A2093.